The sequence spans 2524 residues: Neurogenic locus notch homolog protein 1 (2524 aa).

The N-terminal stretch at 1 to 19 (MDRIGLAVLLCSLPVLTQG) is a signal peptide. 4 EGF-like domains span residues 20–57 (LRCTQTAEMCLNGGRCEMTPGGTGVCLCGNLYFGERCQ), 58–99 (FPNP…KVCL), 102–140 (VDNACVNNPCRNGGTCELLNSVTEYKCRCPPGWTGDSCQ), and 141–177 (QADPCASNPCANGGKCLPFEIQYICKCPPGFHGATCK). Residues 20–1729 (LRCTQTAEMC…METPKPSTLY (1710 aa)) lie on the Extracellular side of the membrane. Disulfide bonds link C22-C35, C29-C45, C47-C56, C62-C74, C68-C87, C89-C98, C106-C117, C111-C128, C130-C139, C145-C156, C150-C165, C167-C176, C183-C194, C188-C203, C205-C214, C221-C232, C226-C242, C244-C253, C260-C271, C265-C280, C282-C291, C298-C311, C305-C320, C322-C331, C338-C349, C343-C358, C360-C369, C375-C386, C380-C397, C399-C408, C415-C428, C422-C437, and C439-C448. The region spanning 179–215 (DINECSQNPCKNGGQCINEFGSYRCTCQNRFTGRNCD) is the EGF-like 5; calcium-binding domain. In terms of domain architecture, EGF-like 6 spans 217 to 254 (PYVPCNPSPCLNGGTCRQTDDTSYDCTCLPGFSGQNCE). A glycan (O-linked (Fuc...) threonine; alternate) is linked at T231. T231 carries an O-linked (GalNAc...) threonine; alternate glycan. In terms of domain architecture, EGF-like 7; calcium-binding spans 256 to 292 (NIDDCPSNNCRNGGTCVDGVNTYNCQCPPDWTGQYCT). Residues 294 to 332 (DVDECQLMPNACQNGGTCHNTYGGYNCVCVNGWTGEDCS) form the EGF-like 8; calcium-binding domain. Residues 334-370 (NIDDCANAACHSGATCHDRVASFYCECPHGRTGLLCH) enclose the EGF-like 9; calcium-binding domain. In terms of domain architecture, EGF-like 10 spans 371–409 (LDNACISNPCNEGSNCDTNPVNGKAICTCPPGYTGPACN). Positions 411–449 (DVDECSLGANPCEHGGRCTNTLGSFQCNCPQGYAGPRCE) constitute an EGF-like 11; calcium-binding domain. Ca(2+)-binding residues include T431 and S434. S434 carries O-linked (Glc...) serine glycosylation. 3 residues coordinate Ca(2+): D451, V452, and E454. One can recognise an EGF-like 12; calcium-binding domain in the interval 451–487 (DVNECLSNPCQNDSTCLDQIGEFQCICMPGYEGLYCE). Intrachain disulfides connect C455/C466, C460/C475, and C477/C486. S457 is a glycosylation site (O-linked (Glc...) serine). Residue N462 is glycosylated (N-linked (GlcNAc...) asparagine). T465 is a glycosylation site (O-linked (Fuc...) threonine). Positions 468 and 469 each coordinate Ca(2+). Ca(2+) contacts are provided by N489, I490, and E492. Residues 489–525 (NIDECASNPCLHNGKCIDKINEFRCDCPTGFSGNLCQ) enclose the EGF-like 13; calcium-binding domain. Disulfide bonds link C493–C504, C498–C513, C515–C524, C531–C542, C536–C551, C553–C562, C569–C579, C574–C588, C590–C599, C606–C617, C611–C626, C628–C637, C644–C654, C649–C663, C665–C674, C681–C692, C686–C701, C703–C712, C719–C729, C724–C738, C740–C749, C756–C767, C761–C776, C778–C787, C794–C805, C799–C814, C816–C825, C832–C843, C837–C854, C856–C865, C872–C883, C877–C892, C894–C903, C910–C921, C915–C930, C932–C941, C948–C959, C953–C968, C970–C979, C986–C997, C991–C1006, C1008–C1017, C1024–C1035, C1029–C1044, C1046–C1055, C1062–C1073, C1067–C1082, C1084–C1093, C1100–C1121, C1115–C1130, C1132–C1141, C1148–C1159, C1153–C1168, C1170–C1179, C1186–C1197, C1191–C1206, C1208–C1217, C1224–C1243, C1237–C1252, C1254–C1263, C1270–C1283, C1275–C1292, C1294–C1303, C1310–C1321, C1315–C1333, C1335–C1344, C1351–C1362, C1356–C1371, C1373–C1382, C1390–C1401, C1395–C1412, C1414–C1423, C1447–C1470, C1452–C1465, and C1461–C1477. Residue S495 is glycosylated (O-linked (Glc...) serine). Residues D506 and K507 each contribute to the Ca(2+) site. An EGF-like 14; calcium-binding domain is found at 527–563 (DFDECTSTPCKNGAKCLDGPNSYTCQCTEGFTGRHCE). Residues 565 to 600 (DINECIPDPCHYGTCKDGIATFTCLCRPGYTGRLCD) enclose the EGF-like 15; calcium-binding domain. One can recognise an EGF-like 16; calcium-binding domain in the interval 602-638 (DINECLSKPCLNGGQCTDRENGYICTCPKGTTGVNCE). The region spanning 640-675 (KIDDCASNLCDNGKCIDKIDGYECTCEPGYTGKLCN) is the EGF-like 17 domain. Residues 677–713 (NINECDSNPCRNGGTCKDQINGFTCVCPDGYHDHMCL) enclose the EGF-like 18; calcium-binding domain. Positions 715–750 (EVNECNSNPCIHGACHDGVNGYKCDCEAGWSGSNCD) constitute an EGF-like 19; calcium-binding domain. Residues 752-788 (NNNECESNPCMNGGTCKDMTGAYICTCKAGFSGPNCQ) enclose the EGF-like 20; calcium-binding domain. Residues 790–826 (NINECSSNPCLNHGTCIDDVAGYKCNCMLPYTGAICE) enclose the EGF-like 21; calcium-binding domain. Residues 828–866 (VLAPCAGSPCKNGGRCKESEDFETFSCECPPGWQGQTCE) enclose the EGF-like 22 domain. One can recognise an EGF-like 23; calcium-binding domain in the interval 868–904 (DMNECVNRPCRNGATCQNTNGSYKCNCKPGYTGRNCE). N-linked (GlcNAc...) asparagine glycosylation occurs at N887. Positions 906–942 (DIDDCQPNPCHNGGSCSDGINMFFCNCPAGFRGPKCE) constitute an EGF-like 24; calcium-binding domain. The EGF-like 25; calcium-binding domain maps to 944-980 (DINECASNPCKNGANCTDCVNSYTCTCQPGFSGIHCE). N-linked (GlcNAc...) asparagine glycosylation occurs at N958. One can recognise an EGF-like 26 domain in the interval 982–1018 (NTPDCTESSCFNGGTCIDGINTFTCQCPPGFTGSYCQ). The 37-residue stretch at 1020 to 1056 (DINECDSKPCLNGGTCQDSYGTYKCTCPQGYTGLNCQ) folds into the EGF-like 27; calcium-binding domain. 2 EGF-like domains span residues 1058–1094 (LVRWCDSSPCKNGGKCWQTNNFYRCECKSGWTGVYCD) and 1096–1142 (PSVS…SYCE). In terms of domain architecture, EGF-like 30; calcium-binding spans 1144–1180 (QVDECSPNPCQNGATCTDYLGGYSCECVAGYHGVNCS). A glycan (N-linked (GlcNAc...) asparagine) is linked at N1178. Residues 1182-1218 (EINECLSHPCQNGGTCIDLINTYKCSCPRGTQGVHCE) enclose the EGF-like 31; calcium-binding domain. The region spanning 1220 to 1264 (NVDDCTPFYDSFTLEPKCFNNGKCIDRVGGYNCICPPGFVGERCE) is the EGF-like 32; calcium-binding domain. EGF-like domains follow at residues 1266–1304 (DVNECLSNPCDSRGTQNCIQLVNDYRCECRQGFTGRRCE), 1306–1346 (VVDG…TCEY), 1347–1383 (DSRTCSNLRCQNGGTCISVLTSSKCVCSEGYTGATCQ), and 1386–1424 (VISPCASHPCYNGGTCQFFAEEPFFQCFCPKNFNGLFCH). A glycan (O-linked (Fuc...) threonine; alternate) is linked at T1400. A glycan (O-linked (GalNAc...) threonine; alternate) is linked at T1400. LNR repeat units lie at residues 1447–1487 (CENE…PWKN), 1488–1529 (CTQS…CNPL), and 1530–1564 (YDQYCKDHFQDGHCDQGCNNAECEWDGLDCANMPE). An N-linked (GlcNAc...) asparagine glycan is attached at N1487. Disulfide bonds link C1488/C1512, C1494/C1507, C1503/C1519, C1534/C1547, and C1543/C1559. Residue N1508 is glycosylated (N-linked (GlcNAc...) asparagine). N-linked (GlcNAc...) asparagine glycosylation is present at N1584. The chain crosses the membrane as a helical span at residues 1730–1750 (PMLSMLVIPLLIIFVFMMVIV). Residues 1751 to 2524 (NKKRRREHGQ…QRTHIPEAFK (774 aa)) lie on the Cytoplasmic side of the membrane. 6 ANK repeats span residues 1876–1919 (DGFT…QLHN), 1924–1953 (TGETALHLAARYARADAAKRLLESSADANV), 1957–1987 (MGRTPLHAAVAADAQGVFQILIRNRATDLDA), 1991–2020 (DGTTPLILAARLAVEGMVEELINAHADVNA), 2024–2053 (FGKSALHWAAAVNNVDAAAVLLKNSANKDM), and 2057–2086 (KEETSLFLAAREGSYETAKVLLDHYANRDI). 3 disordered regions span residues 2144–2230 (NMKP…LNHL), 2369–2407 (MQAQQMQQQQNLQLHQSMQQQHHNSSTTSTHINSPFCSS), and 2451–2524 (LTPP…EAFK). Polar residues-rich tracts occupy residues 2180–2192 (GKTTLLDSGSSGV) and 2208–2230 (DVSSPPLMTSPFQQSPSMPLNHL). Positions 2369-2394 (MQAQQMQQQQNLQLHQSMQQQHHNSS) are enriched in low complexity. 2 stretches are compositionally biased toward polar residues: residues 2395–2407 (TTSTHINSPFCSS) and 2451–2471 (LTPPSQHSYSSPMDNTPSHQL). A compositionally biased stretch (low complexity) spans 2481 to 2496 (PSPESPDQWSSSSPHS). A compositionally biased stretch (polar residues) spans 2497-2516 (NMSDWSEGISSPPTSMQPQR).

It belongs to the NOTCH family. As to quaternary structure, forms a ternary complex with nrarp and rbpj/suh. In terms of processing, O-glycosylated on the EGF-like domains. Contains both O-linked fucose and O-linked glucose. O-linked glycosylation by galnt11 is involved in determination of left/right symmetry: glycosylation promotes activation of notch1, possibly by promoting cleavage by adam17, modulating the balance between motile and immotile (sensory) cilia at the left-right organiser (LRO). Post-translationally, synthesized in the endoplasmic reticulum as an inactive form which is proteolytically cleaved by a furin-like convertase in the trans-Golgi network before it reaches the plasma membrane to yield an active, ligand-accessible form. Cleavage results in a C-terminal fragment N(TM) and a N-terminal fragment N(EC). Following ligand binding, it is cleaved by adam17 to yield a membrane-associated intermediate fragment called notch extracellular truncation (NEXT). Following endocytosis, this fragment is then cleaved by presenilin dependent gamma-secretase to release a Notch-derived peptide containing the intracellular domain (NICD) from the membrane.

It localises to the cell membrane. Its subcellular location is the nucleus. Functionally, functions as a receptor for membrane-bound ligands Jagged-1 (JAG1), Jagged-2 (JAG2) and Delta-1 (DLL1) to regulate cell-fate determination. Upon ligand activation through the released notch intracellular domain (NICD) it forms a transcriptional activator complex with RBPJ/RBPSUH and activates genes of the enhancer of split locus. Affects the implementation of differentiation, proliferation and apoptotic programs. Involved in angiogenesis; negatively regulates endothelial cell proliferation and migration and angiogenic sprouting. Involved in the maturation of both CD4(+) and CD8(+) cells in the thymus. Important for follicular differentiation and possibly cell fate selection within the follicle. During cerebellar development, functions as a receptor for neuronal DNER and is involved in the differentiation of Bergmann glia. Represses neuronal and myogenic differentiation. May play an essential role in postimplantation development, probably in some aspect of cell specification and/or differentiation. May be involved in mesoderm development, somite formation and neurogenesis. Involved in determination of left/right symmetry by modulating the balance between motile and immotile (sensory) cilia at the left-right organiser (LRO). The protein is Neurogenic locus notch homolog protein 1 (notch1) of Xenopus laevis (African clawed frog).